Reading from the N-terminus, the 512-residue chain is Cytochrome P450 72A13 (512 aa).

The helical transmembrane segment at 2 to 22 (EISVASVTVSVAVVVVSWWVW) threads the bilayer. Residue C460 coordinates heme.

Belongs to the cytochrome P450 family. Requires heme as cofactor.

It is found in the membrane. This chain is Cytochrome P450 72A13 (CYP72A13), found in Arabidopsis thaliana (Mouse-ear cress).